We begin with the raw amino-acid sequence, 193 residues long: Potassium-transporting ATPase KdpC subunit (193 aa).

The helical transmembrane segment at 14–34 threads the bilayer; sequence ITFTFLVLCGLVYPLIVTGIA.

The protein belongs to the KdpC family. In terms of assembly, the system is composed of three essential subunits: KdpA, KdpB and KdpC.

Its subcellular location is the cell membrane. Functionally, part of the high-affinity ATP-driven potassium transport (or Kdp) system, which catalyzes the hydrolysis of ATP coupled with the electrogenic transport of potassium into the cytoplasm. This subunit acts as a catalytic chaperone that increases the ATP-binding affinity of the ATP-hydrolyzing subunit KdpB by the formation of a transient KdpB/KdpC/ATP ternary complex. The sequence is that of Potassium-transporting ATPase KdpC subunit from Bacillus cereus (strain Q1).